The sequence spans 334 residues: Phosphate acyltransferase (334 aa).

This sequence belongs to the PlsX family. Homodimer. Probably interacts with PlsY.

The protein localises to the cytoplasm. It carries out the reaction a fatty acyl-[ACP] + phosphate = an acyl phosphate + holo-[ACP]. It participates in lipid metabolism; phospholipid metabolism. Its function is as follows. Catalyzes the reversible formation of acyl-phosphate (acyl-PO(4)) from acyl-[acyl-carrier-protein] (acyl-ACP). This enzyme utilizes acyl-ACP as fatty acyl donor, but not acyl-CoA. This Clostridium kluyveri (strain NBRC 12016) protein is Phosphate acyltransferase.